Reading from the N-terminus, the 1205-residue chain is Solute carrier family 12 member 2 (1205 aa).

Position 1 is an N-acetylmethionine (Met-1). Residues 1-22 show a composition bias toward low complexity; that stretch reads MEPGPARPRLAPAARPGWGRAA. A disordered region spans residues 1-102; it reads MEPGPARPRL…AAAAAAAAAA (102 aa). Residues 1–279 are Cytoplasmic-facing; it reads MEPGPARPRL…AESKGVVKFG (279 aa). Residues 23–35 are compositionally biased toward basic residues; that stretch reads GCRRRGGPARHGR. 2 positions are modified to phosphoserine: Ser-74 and Ser-76. An RFXV motif 1 motif is present at residues 77 to 80; that stretch reads RFQV. Over residues 87-102 the composition is skewed to low complexity; it reads AGRAAAAAAAAAAAAA. An RFXV motif 2 motif is present at residues 133-136; that stretch reads RFRV. Residues 143 to 155 show a composition bias toward low complexity; sequence ASSSADDSLSDAA. The tract at residues 143-187 is disordered; it reads ASSSADDSLSDAAGVGGDGPNVSFQNGGDTVLSEGSSLHSGGGSG. Phosphothreonine is present on residues Thr-196, Thr-200, Thr-205, Thr-210, and Thr-223. At Ser-235 the chain carries Phosphoserine. Thr-259 is modified (phosphothreonine). A discontinuously helical transmembrane segment spans residues 280–309; it reads WIKGVLVRCMLNIWGVMLFIRLSWIVGQAG. Leu-290 is a binding site for Na(+). Positions 291 and 292 each coordinate K(+). Trp-293 provides a ligand contact to Na(+). Chloride-binding residues include Gly-294, Val-295, and Met-296. A helical transmembrane segment spans residues 310-329; that stretch reads IGLSVVVIAMATVVTTITGL. The Cytoplasmic portion of the chain corresponds to 330 to 360; sequence STSAIATNGFVRGGGAYYLISRSLGPEFGGA. Residues 361–388 traverse the membrane as a helical segment; that stretch reads IGLIFAFANAVAVAMYVVGFAETVVELL. Phe-365 contributes to the chloride binding site. Tyr-376 serves as a coordination point for K(+). Over 389-398 the chain is Extracellular; sequence KEHSILMIDE. Residues 399 to 422 traverse the membrane as a helical segment; it reads INDIRIIGAITVVILLGISVAGME. At 423–425 the chain is on the cytoplasmic side; the sequence is WEA. Residues 426 to 447 traverse the membrane as a helical segment; that stretch reads KAQIVLLVILLLAIADFVIGTF. At 448–479 the chain is on the extracellular side; sequence ISLESKKPKGFFGYKSEIFNENFGPDFREEET. Residues 480-497 form a discontinuously helical membrane-spanning segment; the sequence is FFSVFAIFFPAATGILAG. Residues Pro-489, Ala-490, and Thr-492 each contribute to the K(+) site. Residues Pro-489 and Ala-490 each coordinate chloride. Residues Gly-493 and Ile-494 each coordinate chloride. At 498–512 the chain is on the cytoplasmic side; the sequence is ANISGDLADPQSAIP. The chain crosses the membrane as a helical span at residues 513-534; the sequence is KGTLLAILITTVVYIGIAVSVG. The Extracellular portion of the chain corresponds to 535-591; it reads SCVVRDATGNVNDTITTELTNCTSAACKLNFDFSYCESNTCSYGLMNNFQVMSMVSG. Residues Asn-546 and Asn-555 are each glycosylated (N-linked (GlcNAc...) asparagine). 2 cysteine pairs are disulfide-bonded: Cys-556–Cys-561 and Cys-570–Cys-575. Residues 592-616 traverse the membrane as a helical segment; that stretch reads FAPLISAGIFSATLSSALASLVSAP. Positions 603, 606, and 607 each coordinate Na(+). Residues 617 to 644 lie on the Cytoplasmic side of the membrane; the sequence is KIFQALCKDNIYPAFQMFAKGYGKNNEP. The next 2 helical transmembrane spans lie at 645–665 and 666–684; these read LRGYILTFLIALGFILIAELN and VIAPIISNFFLASYALINF. Chloride is bound by residues Phe-675 and Tyr-679. At 685 to 707 the chain is on the cytoplasmic side; that stretch reads SVFHASLAKSPGWRPAFKYYNMW. Transmembrane regions (helical) follow at residues 708–725 and 726–738; these read ISLIGAILCCIVMFVINW and WAALLTYVIVLGL. The Cytoplasmic segment spans residues 739 to 1205; sequence YIYVTYKKPD…NHQSVLTFYS (467 aa). The segment at 754–771 is scissor helix; that stretch reads STQALTYLSALQHSIRLS. 2 positions are modified to phosphoserine: Ser-933 and Ser-937. The tract at residues 953 to 986 is disordered; the sequence is SDQDTCKSSGEKSITQKDEEEDGKTPTQPLLKKE. Ser-987 is modified (phosphoserine).

The protein belongs to the SLC12A transporter family. Homodimer; adopts a domain-swap conformation at the scissor helices connecting the transmembrane domain and C-terminal domain. Post-translationally, phosphorylated at Thr-196, Thr-200 and Thr-205 by OXSR1/OSR1 and STK39/SPAK downstream of WNK kinases (WNK1, WNK2, WNK3 or WNK4), promoting its activity. Widely expressed. High expression found in the cochlea, cochlear lateral wall, and the choroid plexus. Lower expression found in the cerebellum and the cortex.

The protein resides in the basolateral cell membrane. The enzyme catalyses K(+)(out) + 2 chloride(out) + Na(+)(out) = K(+)(in) + 2 chloride(in) + Na(+)(in). Activated following phosphorylation by OXSR1/OSR1 and STK39/SPAK downstream of WNK kinases (WNK1, WNK2, WNK3 or WNK4). Inhibited by bumetanide and furosemide. In terms of biological role, cation-chloride cotransporter which mediates the electroneutral transport of chloride, potassium and/or sodium ions across the membrane. Plays a vital role in the regulation of ionic balance and cell volume. This Mus musculus (Mouse) protein is Solute carrier family 12 member 2 (Slc12a2).